The chain runs to 64 residues: MASKKGVRLIITLECTECRSNPDKRSAGVSRYTTSKNRRNTTGRLELKKFCTHCNKHTVHKEIK.

This sequence belongs to the bacterial ribosomal protein bL33 family.

The sequence is that of Large ribosomal subunit protein bL33 from Gloeothece citriformis (strain PCC 7424) (Cyanothece sp. (strain PCC 7424)).